We begin with the raw amino-acid sequence, 186 residues long: Serine hydrolase RBBP9 (186 aa).

Residues 63–67 form an involved in binding to RB1 region; sequence LHCDE. Active-site charge relay system residues include S75, D138, and H165.

Belongs to the RBBP9 family. Interacts with RB1; the interaction disrupts RB1 binding to E2F1. Interacts with RBL1 and RBL2. In terms of tissue distribution, expressed at higher levels in tumor tissues such as carcinoma.

It catalyses the reaction valacyclovir + H2O = acyclovir + L-valine + H(+). Its activity is regulated as follows. Inhibited by the natural product emetine produced by the ipecac root. Its function is as follows. Serine hydrolase. Catalyzes the hydrolytic activation of amino acid ester of the antiviral prodrug valacyclovir to its corresponding active drug, acyclovir. May negatively regulate basal or autocrine TGF-beta signaling by suppressing SMAD2-SMAD3 phosphorylation. May play a role in the transformation process due to its capacity to confer resistance to the growth-inhibitory effects of TGF-beta through interaction with RB1 and the subsequent displacement of E2F1. The protein is Serine hydrolase RBBP9 of Homo sapiens (Human).